The sequence spans 422 residues: Dihydroorotase (422 aa).

Residues His59 and His61 each coordinate Zn(2+). Residues 61 to 63 (HFR) and Asn93 each bind substrate. Positions 150, 177, and 230 each coordinate Zn(2+). Asn276 is a binding site for substrate. Asp303 contributes to the Zn(2+) binding site. Residue Asp303 is part of the active site. A substrate-binding site is contributed by His307.

It belongs to the metallo-dependent hydrolases superfamily. DHOase family. Class I DHOase subfamily. The cofactor is Zn(2+).

The enzyme catalyses (S)-dihydroorotate + H2O = N-carbamoyl-L-aspartate + H(+). It functions in the pathway pyrimidine metabolism; UMP biosynthesis via de novo pathway; (S)-dihydroorotate from bicarbonate: step 3/3. Functionally, catalyzes the reversible cyclization of carbamoyl aspartate to dihydroorotate. The sequence is that of Dihydroorotase from Streptococcus pneumoniae serotype 4 (strain ATCC BAA-334 / TIGR4).